The primary structure comprises 174 residues: Protein PopB (174 aa).

The disordered stretch occupies residues 1–174 (MSHSKIKAGG…EAMKIKDDDD (174 aa)). Residues 50–65 (LNKSNLGSDSQTWTPG) show a composition bias toward polar residues. The segment covering 66–78 (STMVSLKSRSSSS) has biased composition (low complexity). Residues 79 to 89 (HKPDTGGDTKP) show a composition bias toward basic and acidic residues. The span at 147-161 (IALQRAIQRQTQTRQ) shows a compositional bias: low complexity. Positions 162-174 (KMQEAMKIKDDDD) are enriched in basic and acidic residues.

It localises to the secreted. Probably involved in host-pathogen interactions. This Ralstonia nicotianae (strain ATCC BAA-1114 / GMI1000) (Ralstonia solanacearum) protein is Protein PopB (popB).